The chain runs to 110 residues: Large ribosomal subunit protein uL22 (110 aa).

Belongs to the universal ribosomal protein uL22 family. Part of the 50S ribosomal subunit.

Functionally, this protein binds specifically to 23S rRNA; its binding is stimulated by other ribosomal proteins, e.g. L4, L17, and L20. It is important during the early stages of 50S assembly. It makes multiple contacts with different domains of the 23S rRNA in the assembled 50S subunit and ribosome. In terms of biological role, the globular domain of the protein is located near the polypeptide exit tunnel on the outside of the subunit, while an extended beta-hairpin is found that lines the wall of the exit tunnel in the center of the 70S ribosome. The protein is Large ribosomal subunit protein uL22 of Yersinia enterocolitica serotype O:8 / biotype 1B (strain NCTC 13174 / 8081).